Consider the following 199-residue polypeptide: Holliday junction branch migration complex subunit RuvA (199 aa).

A domain I region spans residues 1-63 (MIGCLIGEVF…EDAQQLYGFS (63 aa)). A domain II region spans residues 64-142 (DAQEKTIFRT…TLAQGTSSAA (79 aa)). Residues 143–150 (ALPQIQFV) are flexible linker. The tract at residues 150 to 199 (VSNSPVAEAEAALQSLGYKPLEAQKAVAAVKADYTESADIIRAALKSMMK) is domain III.

It belongs to the RuvA family. Homotetramer. Forms an RuvA(8)-RuvB(12)-Holliday junction (HJ) complex. HJ DNA is sandwiched between 2 RuvA tetramers; dsDNA enters through RuvA and exits via RuvB. An RuvB hexamer assembles on each DNA strand where it exits the tetramer. Each RuvB hexamer is contacted by two RuvA subunits (via domain III) on 2 adjacent RuvB subunits; this complex drives branch migration. In the full resolvosome a probable DNA-RuvA(4)-RuvB(12)-RuvC(2) complex forms which resolves the HJ.

It is found in the cytoplasm. Its function is as follows. The RuvA-RuvB-RuvC complex processes Holliday junction (HJ) DNA during genetic recombination and DNA repair, while the RuvA-RuvB complex plays an important role in the rescue of blocked DNA replication forks via replication fork reversal (RFR). RuvA specifically binds to HJ cruciform DNA, conferring on it an open structure. The RuvB hexamer acts as an ATP-dependent pump, pulling dsDNA into and through the RuvAB complex. HJ branch migration allows RuvC to scan DNA until it finds its consensus sequence, where it cleaves and resolves the cruciform DNA. This is Holliday junction branch migration complex subunit RuvA from Acinetobacter baumannii (strain AB307-0294).